Consider the following 108-residue polypeptide: Protein Asterix (108 aa).

The disordered stretch occupies residues 1–29 (MNMTVDPRRKEKINRYKAPKNQGQSGGAN). Residues 80 to 96 (VLSSFMLSVSAVVMSYL) form a helical membrane-spanning segment.

It belongs to the Asterix family.

Its subcellular location is the membrane. The sequence is that of Protein Asterix from Drosophila melanogaster (Fruit fly).